Reading from the N-terminus, the 372-residue chain is Germination protease (372 aa).

Residues 1–15 (MNRSIDLSMYSVRTD) constitute a propeptide that is removed on maturation.

It belongs to the peptidase A25 family. Homotetramer. Autoproteolytically processed. The inactive tetrameric zymogen termed p46 autoprocesses to a smaller form termed p41, which is active only during spore germination.

The enzyme catalyses Endopeptidase action with P4 Glu or Asp, P1 preferably Glu &gt; Asp, P1' hydrophobic and P2' Ala.. Functionally, initiates the rapid degradation of small, acid-soluble proteins during spore germination. The polypeptide is Germination protease (Geobacillus sp. (strain WCH70)).